A 610-amino-acid chain; its full sequence is Elongation factor 4 (610 aa).

The tr-type G domain maps to 7-189 (SRIRNFSIIA…AIVQRIPPPK (183 aa)). Residues 19–24 (DHGKST) and 136–139 (NKID) each bind GTP.

This sequence belongs to the TRAFAC class translation factor GTPase superfamily. Classic translation factor GTPase family. LepA subfamily.

The protein resides in the cell inner membrane. It catalyses the reaction GTP + H2O = GDP + phosphate + H(+). Functionally, required for accurate and efficient protein synthesis under certain stress conditions. May act as a fidelity factor of the translation reaction, by catalyzing a one-codon backward translocation of tRNAs on improperly translocated ribosomes. Back-translocation proceeds from a post-translocation (POST) complex to a pre-translocation (PRE) complex, thus giving elongation factor G a second chance to translocate the tRNAs correctly. Binds to ribosomes in a GTP-dependent manner. The sequence is that of Elongation factor 4 from Thermus thermophilus (strain ATCC BAA-163 / DSM 7039 / HB27).